A 719-amino-acid chain; its full sequence is Calpain-12 (719 aa).

The Calpain catalytic domain occupies 45–341 (LFRDPYFPAG…FDTVQICSLS (297 aa)). Residues Cys105, His259, and Asn283 contribute to the active site. The domain III stretch occupies residues 342-540 (PEVLGPSPEG…DDVISADLQS (199 aa)). Positions 393-402 (DEEDDEDEEG) are enriched in acidic residues. The tract at residues 393–418 (DEEDDEDEEGPWGGWGAAGARGPARG) is disordered. A domain IV region spans residues 541–719 (LQGPYLPLEL…RQWMEVATFS (179 aa)). An EF-hand domain is found at 620-655 (GYLLEWQAIFNKFDEDTSGTMNSYELRLALNAAGFH). 5 residues coordinate Ca(2+): Asp633, Asp635, Ser637, Thr639, and Glu644.

It belongs to the peptidase C2 family.

Functionally, calcium-regulated non-lysosomal thiol-protease. This chain is Calpain-12 (CAPN12), found in Homo sapiens (Human).